The sequence spans 132 residues: Ribonuclease P protein component (132 aa).

This sequence belongs to the RnpA family. In terms of assembly, consists of a catalytic RNA component (M1 or rnpB) and a protein subunit.

It catalyses the reaction Endonucleolytic cleavage of RNA, removing 5'-extranucleotides from tRNA precursor.. Its function is as follows. RNaseP catalyzes the removal of the 5'-leader sequence from pre-tRNA to produce the mature 5'-terminus. It can also cleave other RNA substrates such as 4.5S RNA. The protein component plays an auxiliary but essential role in vivo by binding to the 5'-leader sequence and broadening the substrate specificity of the ribozyme. The sequence is that of Ribonuclease P protein component from Marinomonas sp. (strain MWYL1).